The sequence spans 120 residues: Ribonuclease P protein component (120 aa).

Belongs to the RnpA family. As to quaternary structure, consists of a catalytic RNA component (M1 or rnpB) and a protein subunit.

It carries out the reaction Endonucleolytic cleavage of RNA, removing 5'-extranucleotides from tRNA precursor.. RNaseP catalyzes the removal of the 5'-leader sequence from pre-tRNA to produce the mature 5'-terminus. It can also cleave other RNA substrates such as 4.5S RNA. The protein component plays an auxiliary but essential role in vivo by binding to the 5'-leader sequence and broadening the substrate specificity of the ribozyme. The chain is Ribonuclease P protein component from Acidothermus cellulolyticus (strain ATCC 43068 / DSM 8971 / 11B).